Consider the following 253-residue polypeptide: tRNA pseudouridine synthase A (253 aa).

Asp52 serves as the catalytic Nucleophile. Tyr110 lines the substrate pocket.

It belongs to the tRNA pseudouridine synthase TruA family. As to quaternary structure, homodimer.

The catalysed reaction is uridine(38/39/40) in tRNA = pseudouridine(38/39/40) in tRNA. Functionally, formation of pseudouridine at positions 38, 39 and 40 in the anticodon stem and loop of transfer RNAs. The sequence is that of tRNA pseudouridine synthase A from Thermus thermophilus (strain ATCC BAA-163 / DSM 7039 / HB27).